Here is a 234-residue protein sequence, read N- to C-terminus: Small ribosomal subunit protein uS3 (234 aa).

The KH type-2 domain maps to 39 to 107 (VRKFLNKELA…PAQINIAEVK (69 aa)).

This sequence belongs to the universal ribosomal protein uS3 family. In terms of assembly, part of the 30S ribosomal subunit. Forms a tight complex with proteins S10 and S14.

Its function is as follows. Binds the lower part of the 30S subunit head. Binds mRNA in the 70S ribosome, positioning it for translation. This is Small ribosomal subunit protein uS3 from Haemophilus ducreyi (strain 35000HP / ATCC 700724).